The sequence spans 66 residues: Large ribosomal subunit protein bL32 (66 aa).

Basic residues predominate over residues 1 to 19; it reads MAIVPKRKTSKQRKHKRNT. Positions 1-21 are disordered; that stretch reads MAIVPKRKTSKQRKHKRNTHS.

This sequence belongs to the bacterial ribosomal protein bL32 family.

This Mycoplasmopsis synoviae (strain 53) (Mycoplasma synoviae) protein is Large ribosomal subunit protein bL32.